The chain runs to 459 residues: Mitochondrial distribution and morphology protein 10 (459 aa).

Belongs to the MDM10 family. As to quaternary structure, component of the ER-mitochondria encounter structure (ERMES) or MDM complex, composed of MMM1, MDM10, MDM12 and MDM34. Associates with the mitochondrial outer membrane sorting assembly machinery SAM(core) complex.

It localises to the mitochondrion outer membrane. Functionally, component of the ERMES/MDM complex, which serves as a molecular tether to connect the endoplasmic reticulum and mitochondria. Components of this complex are involved in the control of mitochondrial shape and protein biogenesis and may function in phospholipid exchange. MDM10 is involved in the late assembly steps of the general translocase of the mitochondrial outer membrane (TOM complex). Functions in the TOM40-specific route of the assembly of outer membrane beta-barrel proteins, including the association of TOM40 with the receptor TOM22 and small TOM proteins. Can associate with the SAM(core) complex as well as the MDM12-MMM1 complex, both involved in late steps of the major beta-barrel assembly pathway, that is responsible for biogenesis of all outer membrane beta-barrel proteins. May act as a switch that shuttles between both complexes and channels precursor proteins into the TOM40-specific pathway. Plays a role in mitochondrial morphology and in the inheritance of mitochondria. This Clavispora lusitaniae (strain ATCC 42720) (Yeast) protein is Mitochondrial distribution and morphology protein 10.